The sequence spans 599 residues: Elongation factor 4 (599 aa).

Positions 2 to 184 (KNIRNFSIIA…EIVAKIPAPK (183 aa)) constitute a tr-type G domain. Residues 14–19 (DHGKST) and 131–134 (NKID) each bind GTP.

Belongs to the TRAFAC class translation factor GTPase superfamily. Classic translation factor GTPase family. LepA subfamily.

The protein localises to the cell inner membrane. The enzyme catalyses GTP + H2O = GDP + phosphate + H(+). Its function is as follows. Required for accurate and efficient protein synthesis under certain stress conditions. May act as a fidelity factor of the translation reaction, by catalyzing a one-codon backward translocation of tRNAs on improperly translocated ribosomes. Back-translocation proceeds from a post-translocation (POST) complex to a pre-translocation (PRE) complex, thus giving elongation factor G a second chance to translocate the tRNAs correctly. Binds to ribosomes in a GTP-dependent manner. The polypeptide is Elongation factor 4 (Mannheimia succiniciproducens (strain KCTC 0769BP / MBEL55E)).